A 391-amino-acid polypeptide reads, in one-letter code: Phosphoglycerate kinase (391 aa).

Substrate-binding positions include 21–23 (DLN), arginine 36, 59–62 (HLGR), arginine 113, and arginine 146. ATP is bound by residues lysine 197, glutamate 319, and 345-348 (GGDT).

It belongs to the phosphoglycerate kinase family. In terms of assembly, monomer.

It localises to the cytoplasm. The enzyme catalyses (2R)-3-phosphoglycerate + ATP = (2R)-3-phospho-glyceroyl phosphate + ADP. It functions in the pathway carbohydrate degradation; glycolysis; pyruvate from D-glyceraldehyde 3-phosphate: step 2/5. In Shewanella sp. (strain MR-7), this protein is Phosphoglycerate kinase.